The primary structure comprises 357 residues: 3-dehydroquinate synthase (357 aa).

Residues 104–108 (GVVGD), 128–129 (TT), K141, and 168–171 (FLET) contribute to the NAD(+) site. Positions 183, 243, and 260 each coordinate Zn(2+).

The protein belongs to the sugar phosphate cyclases superfamily. Dehydroquinate synthase family. NAD(+) is required as a cofactor. It depends on Co(2+) as a cofactor. Zn(2+) serves as cofactor.

Its subcellular location is the cytoplasm. The enzyme catalyses 7-phospho-2-dehydro-3-deoxy-D-arabino-heptonate = 3-dehydroquinate + phosphate. It participates in metabolic intermediate biosynthesis; chorismate biosynthesis; chorismate from D-erythrose 4-phosphate and phosphoenolpyruvate: step 2/7. In terms of biological role, catalyzes the conversion of 3-deoxy-D-arabino-heptulosonate 7-phosphate (DAHP) to dehydroquinate (DHQ). In Streptococcus pyogenes serotype M6 (strain ATCC BAA-946 / MGAS10394), this protein is 3-dehydroquinate synthase.